Reading from the N-terminus, the 394-residue chain is Histidinol dehydrogenase (394 aa).

The NAD(+) site is built by Y113, Q172, and N195. 3 residues coordinate substrate: T218, Q240, and H243. The Zn(2+) site is built by Q240 and H243. Catalysis depends on proton acceptor residues E294 and H295. The substrate site is built by H295, D327, E380, and H385. Residue D327 participates in Zn(2+) binding. Position 385 (H385) interacts with Zn(2+).

This sequence belongs to the histidinol dehydrogenase family. Requires Zn(2+) as cofactor.

The catalysed reaction is L-histidinol + 2 NAD(+) + H2O = L-histidine + 2 NADH + 3 H(+). Its pathway is amino-acid biosynthesis; L-histidine biosynthesis; L-histidine from 5-phospho-alpha-D-ribose 1-diphosphate: step 9/9. In terms of biological role, catalyzes the sequential NAD-dependent oxidations of L-histidinol to L-histidinaldehyde and then to L-histidine. The chain is Histidinol dehydrogenase from Sulfurisphaera tokodaii (strain DSM 16993 / JCM 10545 / NBRC 100140 / 7) (Sulfolobus tokodaii).